We begin with the raw amino-acid sequence, 270 residues long: uncharacterized protein (270 aa).

Disordered stretches follow at residues 1–21 (MSTN…YEKP) and 53–77 (PNIL…AKLN). Residues 58–75 (SKHDGDKNKNDKKKEDAK) show a composition bias toward basic and acidic residues. Positions 182 to 270 (EENKSREEKH…KIEDNLNTYE (89 aa)) form a coiled coil.

This is an uncharacterized protein from Plasmodium falciparum (isolate 3D7).